A 141-amino-acid polypeptide reads, in one-letter code: Phosphoribosyl-AMP cyclohydrolase (141 aa).

Aspartate 91 contributes to the Mg(2+) binding site. A Zn(2+)-binding site is contributed by cysteine 92. Residues aspartate 93 and aspartate 95 each contribute to the Mg(2+) site. Residues cysteine 110 and cysteine 117 each coordinate Zn(2+).

The protein belongs to the PRA-CH family. Homodimer. Mg(2+) serves as cofactor. Requires Zn(2+) as cofactor.

The protein resides in the cytoplasm. The enzyme catalyses 1-(5-phospho-beta-D-ribosyl)-5'-AMP + H2O = 1-(5-phospho-beta-D-ribosyl)-5-[(5-phospho-beta-D-ribosylamino)methylideneamino]imidazole-4-carboxamide. Its pathway is amino-acid biosynthesis; L-histidine biosynthesis; L-histidine from 5-phospho-alpha-D-ribose 1-diphosphate: step 3/9. Functionally, catalyzes the hydrolysis of the adenine ring of phosphoribosyl-AMP. The chain is Phosphoribosyl-AMP cyclohydrolase from Brucella anthropi (strain ATCC 49188 / DSM 6882 / CCUG 24695 / JCM 21032 / LMG 3331 / NBRC 15819 / NCTC 12168 / Alc 37) (Ochrobactrum anthropi).